The sequence spans 438 residues: Minor capsid protein p49 (438 aa).

Positions 145-167 are disordered; the sequence is NCLTQPSSLPSLKNPKNSSVPST.

The protein belongs to the asfivirus p49 structural protein family.

Its subcellular location is the virion. Together with the penton and the other minor capsid proteins (M1249L, p17), forms a complicated network immediately below the outer capsid shell, stabilizing the whole capsid. Plays an essential role in the formation of infectious virus particles. Especially required for the formation of the capsid vertices. During virion assembly, associates with the membrane and probably mediates the docking of the penton complex to the inner membrane, where it recruits the capsomers to form the penton core. This chain is Minor capsid protein p49, found in Ornithodoros (relapsing fever ticks).